We begin with the raw amino-acid sequence, 357 residues long: DNA replication and repair protein RecF (357 aa).

Residue 30–37 (GANGSGKT) participates in ATP binding.

Belongs to the RecF family.

The protein resides in the cytoplasm. In terms of biological role, the RecF protein is involved in DNA metabolism; it is required for DNA replication and normal SOS inducibility. RecF binds preferentially to single-stranded, linear DNA. It also seems to bind ATP. The polypeptide is DNA replication and repair protein RecF (Shigella dysenteriae serotype 1 (strain Sd197)).